Consider the following 375-residue polypeptide: Alcohol dehydrogenase 1C (375 aa).

Position 2 is an N-acetylserine (serine 2). Position 23 is a phosphoserine (serine 23). Residues cysteine 47, histidine 68, cysteine 98, cysteine 101, cysteine 104, cysteine 112, and cysteine 175 each coordinate Zn(2+). NAD(+) contacts are provided by residues glycine 200–glycine 205, aspartate 224, lysine 229, isoleucine 270, valine 293–valine 295, alanine 318–phenylalanine 320, and arginine 370.

Belongs to the zinc-containing alcohol dehydrogenase family. Dimer of identical or non-identical chains of class I alcohol dehydrogenase: ADH1A, ADH1B, and ADH1C. The cofactor is Zn(2+).

It is found in the cytoplasm. The enzyme catalyses a primary alcohol + NAD(+) = an aldehyde + NADH + H(+). It catalyses the reaction ethanol + NAD(+) = acetaldehyde + NADH + H(+). Alcohol dehydrogenase. Exhibits high activity for ethanol oxidation and plays a major role in ethanol catabolism. The polypeptide is Alcohol dehydrogenase 1C (ADH1C) (Homo sapiens (Human)).